The chain runs to 235 residues: Carboxy-S-adenosyl-L-methionine synthase (235 aa).

S-adenosyl-L-methionine-binding positions include tyrosine 35, 60–62, 84–85, 110–111, asparagine 125, and arginine 192; these read GCS, DN, and DI.

It belongs to the class I-like SAM-binding methyltransferase superfamily. Cx-SAM synthase family. In terms of assembly, homodimer.

It catalyses the reaction prephenate + S-adenosyl-L-methionine = carboxy-S-adenosyl-L-methionine + 3-phenylpyruvate + H2O. In terms of biological role, catalyzes the conversion of S-adenosyl-L-methionine (SAM) to carboxy-S-adenosyl-L-methionine (Cx-SAM). The protein is Carboxy-S-adenosyl-L-methionine synthase of Sulfurimonas denitrificans (strain ATCC 33889 / DSM 1251) (Thiomicrospira denitrificans (strain ATCC 33889 / DSM 1251)).